The sequence spans 444 residues: Mitogen-activated protein kinase mpk-1 (444 aa).

Polar residues-rich tracts occupy residues 1 to 17 (MPTW…TTRN) and 24 to 56 (GHPQ…HVRQ). A disordered region spans residues 1-56 (MPTWIPNNLCAQPTTRNAKPPSNGHPQATQQQSAPGSLAYRNSSNIPNGATNHVRQ). The 289-residue stretch at 96-384 (YVNLSYIGEG…IEQALAHPYL (289 aa)) folds into the Protein kinase domain. ATP is bound by residues 102–110 (IGEGAYGMV) and Lys-125. Asp-220 (proton acceptor) is an active-site residue. Position 256 is a phosphothreonine (Thr-256). The TXY signature appears at 256-258 (TEY). Phosphotyrosine is present on Tyr-258.

Belongs to the protein kinase superfamily. CMGC Ser/Thr protein kinase family. MAP kinase subfamily. As to quaternary structure, isoform a interacts with gck-1 (via N-terminus). It depends on Mg(2+) as a cofactor. In terms of processing, isoform a is phosphorylated at the pachytene stage during oogenesis and is negatively regulated by gck-1. Isoform b is phosphorylated in proximal oocytes. As to expression, expressed in cells lining the rectum. Isoform a is expressed in nervous system, body wall muscles and posterior intestine. Isoform b expression may be restricted to germline.

The catalysed reaction is L-seryl-[protein] + ATP = O-phospho-L-seryl-[protein] + ADP + H(+). It catalyses the reaction L-threonyl-[protein] + ATP = O-phospho-L-threonyl-[protein] + ADP + H(+). Its activity is regulated as follows. Activated by dual phosphorylation at Thr-256 and Tyr-258. May be inactivated by lip-1-mediated dephosphorylation. Functions in let-60 Ras signaling pathway; acts downstream of lin-45 raf kinase, but before the lin-1 gene product in controlling vulval cell differentiation. Plays a negative role in proximal germline proliferation in the mitotic zone. Required for progression of developing oocytes through the pachytene stage, perhaps acting after efl-1/dpl-1-mediated gene activation and before gld-1 down-regulation. May play a role in global X chromosome reactivation or be indirectly required for progression of germ cells through meiosis to the point where X reactivation occurs. In oocytes, inhibits the activity of the chloride channel clh-3, likely by activating gck-3. Plays a role in response to M.nematophilum-mediated bacterial infection by promoting tail swelling and preventing constipation. Involved in fluid homeostasis. In addition, involved in the up-regulation of lysozyme ilys-3 expression in the intestine in responses to M.nematophilum-mediated bacterial infection. By phosphorylating transcription factor skn-1 (isoform c) may play a role in increasing life span downstream of lin-45, let-60 and mek-2. By up-regulating cep-1 and down-regulating gld-1 expression in the late pachytene stage, plays a role in germline apoptosis in response to DNA damage. Regulates egl-1 expression in response to DNA damage, probably upstream of cep-1. Functionally, suppresses germline tumor formation by preventing the dedifferentiation of secondary spermatocytes probably upstream of rskn-1. The polypeptide is Mitogen-activated protein kinase mpk-1 (mpk-1) (Caenorhabditis elegans).